We begin with the raw amino-acid sequence, 375 residues long: MSESAPTPRRERVIVGMSGGVDSSVSALLLQQQGYQVEGLFMKNWDEDDGTEYCTAREDLADAQAVCDRIGIKLHTANFAAEYWDNVFEHFLAEYKAGRTPNPDILCNREIKFKAFLDYALMLGADLIATGHYVRRRDLDGRTELLKGLDPNKDQSYFLHAVGGEQIARSLFPVGELEKPEVRAIAEKHGLATAKKKDSTGICFIGERRFTDFLKQYLPAQPGDIETTEGKVIGRHSGLMYHTIGQRQGLGIGGLKEAGDDPWYVLGKDLQRNVLLVGQGNDHPLLFSRALLASRIYWVNPVELERPRRLRAKVRYRQSDQDCVLEKTADGYRAVFDEPQRAVTPGQSVVFYDGEVCLGGGVIETAEAWDFGGRP.

Residues 16 to 23 (GMSGGVDS) and M42 contribute to the ATP site. An interaction with target base in tRNA region spans residues 102-104 (NPD). The active-site Nucleophile is the C107. The cysteines at positions 107 and 203 are disulfide-linked. ATP is bound at residue G131. An interaction with tRNA region spans residues 153–155 (KDQ). The Cysteine persulfide intermediate role is filled by C203. The tract at residues 315-316 (RY) is interaction with tRNA.

This sequence belongs to the MnmA/TRMU family.

Its subcellular location is the cytoplasm. The catalysed reaction is S-sulfanyl-L-cysteinyl-[protein] + uridine(34) in tRNA + AH2 + ATP = 2-thiouridine(34) in tRNA + L-cysteinyl-[protein] + A + AMP + diphosphate + H(+). In terms of biological role, catalyzes the 2-thiolation of uridine at the wobble position (U34) of tRNA, leading to the formation of s(2)U34. The protein is tRNA-specific 2-thiouridylase MnmA of Pseudomonas paraeruginosa (strain DSM 24068 / PA7) (Pseudomonas aeruginosa (strain PA7)).